The following is a 316-amino-acid chain: Porphobilinogen deaminase (316 aa).

S-(dipyrrolylmethanemethyl)cysteine is present on cysteine 245.

This sequence belongs to the HMBS family. In terms of assembly, monomer. Requires dipyrromethane as cofactor.

The enzyme catalyses 4 porphobilinogen + H2O = hydroxymethylbilane + 4 NH4(+). The protein operates within porphyrin-containing compound metabolism; protoporphyrin-IX biosynthesis; coproporphyrinogen-III from 5-aminolevulinate: step 2/4. It functions in the pathway porphyrin-containing compound metabolism; chlorophyll biosynthesis. In terms of biological role, tetrapolymerization of the monopyrrole PBG into the hydroxymethylbilane pre-uroporphyrinogen in several discrete steps. The sequence is that of Porphobilinogen deaminase from Prochlorococcus marinus (strain MIT 9515).